Consider the following 142-residue polypeptide: 5-hydroxymethyl-dUMP N-hydrolase (142 aa).

Positions 7, 9, 10, 11, 78, 80, 84, and 108 each coordinate 5-hydroxymethyl-dUMP.

It belongs to the 2'-deoxynucleoside 5'-phosphate N-hydrolase 1 family. As to quaternary structure, monomer and homodimer.

The protein localises to the cytoplasm. Its subcellular location is the nucleus. It carries out the reaction 5-hydroxymethyl-dUMP + H2O = 5-hydroxymethyluracil + 2-deoxy-D-ribose 5-phosphate. Part of a nucleotide salvage pathway that eliminates epigenetically modified 5-hydroxymethyl-dCMP (hmdCMP) in a two-step process entailing deamination to cytotoxic 5-hydroxymethyl-dUMP (hmdUMP), followed by its hydrolysis into 5-hydroxymethyluracil (hmU) and 2-deoxy-D-ribose 5-phosphate (deoxyribosephosphate). Catalyzes the second step in that pathway, the hydrolysis of the N-glycosidic bond in hmdUMP, degrading this cytotoxic nucleotide to avoid its genomic integration. The protein is 5-hydroxymethyl-dUMP N-hydrolase (dnph1) of Tetraodon nigroviridis (Spotted green pufferfish).